We begin with the raw amino-acid sequence, 195 residues long: Probable GTP-binding protein EngB (195 aa).

The 172-residue stretch at 24–195 folds into the EngB-type G domain; sequence ELPEIALAGR…EAWDAILEKL (172 aa). Residues 32–39, 59–63, 77–80, 144–147, and 176–178 each bind GTP; these read GRSNVGKS, GKTQL, DVPG, TKAD, and FSS. Mg(2+) is bound by residues serine 39 and threonine 61.

It belongs to the TRAFAC class TrmE-Era-EngA-EngB-Septin-like GTPase superfamily. EngB GTPase family. Mg(2+) serves as cofactor.

In terms of biological role, necessary for normal cell division and for the maintenance of normal septation. This is Probable GTP-binding protein EngB from Streptococcus pneumoniae (strain ATCC 700669 / Spain 23F-1).